The primary structure comprises 330 residues: Beta-ketoacyl-[acyl-carrier-protein] synthase III (330 aa).

Catalysis depends on residues cysteine 118 and histidine 257. Positions 258–262 (QANLR) are ACP-binding. Residue asparagine 287 is part of the active site.

It belongs to the thiolase-like superfamily. FabH family. In terms of assembly, homodimer.

The protein localises to the cytoplasm. It carries out the reaction malonyl-[ACP] + acetyl-CoA + H(+) = 3-oxobutanoyl-[ACP] + CO2 + CoA. It functions in the pathway lipid metabolism; fatty acid biosynthesis. Catalyzes the condensation reaction of fatty acid synthesis by the addition to an acyl acceptor of two carbons from malonyl-ACP. Catalyzes the first condensation reaction which initiates fatty acid synthesis and may therefore play a role in governing the total rate of fatty acid production. Possesses both acetoacetyl-ACP synthase and acetyl transacylase activities. Its substrate specificity determines the biosynthesis of branched-chain and/or straight-chain of fatty acids. This Nitratidesulfovibrio vulgaris (strain DSM 19637 / Miyazaki F) (Desulfovibrio vulgaris) protein is Beta-ketoacyl-[acyl-carrier-protein] synthase III.